Here is a 174-residue protein sequence, read N- to C-terminus: Dual-action ribosomal maturation protein DarP (174 aa).

This sequence belongs to the DarP family.

It localises to the cytoplasm. Its function is as follows. Member of a network of 50S ribosomal subunit biogenesis factors which assembles along the 30S-50S interface, preventing incorrect 23S rRNA structures from forming. Promotes peptidyl transferase center (PTC) maturation. This is Dual-action ribosomal maturation protein DarP from Vibrio campbellii (strain ATCC BAA-1116).